The primary structure comprises 148 residues: Protein H2A.6 (148 aa).

Residues 120–148 form a disordered region; that stretch reads GAAEKESTKSPKKKAATKSPKKKTAATKE. Short sequence motifs (SPKK motif) lie at residues 129–132 and 138–141; these read SPKK. The segment covering 129 to 148 has biased composition (basic residues); sequence SPKKKAATKSPKKKTAATKE.

Belongs to the histone H2A family. In terms of assembly, the nucleosome is a histone octamer containing two molecules each of H2A, H2B, H3 and H4 assembled in one H3-H4 heterotetramer and two H2A-H2B heterodimers. The octamer wraps approximately 147 bp of DNA. In terms of tissue distribution, abundant in meristematic tissues.

The protein resides in the nucleus. Its subcellular location is the chromosome. In terms of biological role, core component of nucleosome. Nucleosomes wrap and compact DNA into chromatin, limiting DNA accessibility to the cellular machineries which require DNA as a template. Histones thereby play a central role in transcription regulation, DNA repair, DNA replication and chromosomal stability. DNA accessibility is regulated via a complex set of post-translational modifications of histones, also called histone code, and nucleosome remodeling. This chain is Protein H2A.6 (H2A-3), found in Triticum aestivum (Wheat).